Here is a 318-residue protein sequence, read N- to C-terminus: Porphobilinogen deaminase (318 aa).

Cys-241 bears the S-(dipyrrolylmethanemethyl)cysteine mark.

Belongs to the HMBS family. In terms of assembly, monomer. Dipyrromethane is required as a cofactor.

The enzyme catalyses 4 porphobilinogen + H2O = hydroxymethylbilane + 4 NH4(+). It participates in porphyrin-containing compound metabolism; protoporphyrin-IX biosynthesis; coproporphyrinogen-III from 5-aminolevulinate: step 2/4. Functionally, tetrapolymerization of the monopyrrole PBG into the hydroxymethylbilane pre-uroporphyrinogen in several discrete steps. This chain is Porphobilinogen deaminase, found in Geotalea daltonii (strain DSM 22248 / JCM 15807 / FRC-32) (Geobacter daltonii).